Consider the following 614-residue polypeptide: FAD-dependent monooxygenase terD (614 aa).

Residues methionine 1–leucine 23 form the signal peptide. FAD is bound by residues aspartate 6–serine 35, glutamine 44, valine 137, and arginine 239–tyrosine 241. Asparagine 260 carries an N-linked (GlcNAc...) asparagine glycan. The FAD site is built by tyrosine 282 and aspartate 303. A glycan (N-linked (GlcNAc...) asparagine) is linked at asparagine 317. Residue serine 319 coordinates FAD. An N-linked (GlcNAc...) asparagine glycan is attached at asparagine 602.

This sequence belongs to the PheA/TfdB FAD monooxygenase family. FAD serves as cofactor.

It participates in secondary metabolite biosynthesis. Its function is as follows. FAD-dependent monooxygenase; part of the gene cluster that mediates the biosynthesis of terrein, a fungal metabolite with ecological, antimicrobial, antiproliferative, and antioxidative activities. The first step in the pathway is performed by the polyketide synthase terA that produces 4-hydroxy-6-methylpyranon (4-HMP), orsellinic acid (OA), and 2,3-dehydro-6-hydroxymellein (2,3-dehydro-6-HM) by condensing acetyl-CoA with two, three, or four malonyl-CoA units, respectively. 4-HMP and OA are not pathway intermediates, but are rather shunt or side products. 2,3-dehydro-6-HM is further converted to 6-hydroxymellein (6-HM) by the 6-hydroxymellein synthase terB. The monooxygenases terC and terD, the multicopper oxidase terE and the Kelch-like protein terF are then involved in the transformation of 6-HM to terrein. Even if they are co-regulated with the other terrein cluster genes, terH and terI seem to be dispensable for terrein production; whereas one or both of the 2 transporters terG and terJ are probably required for efficient secretion of metabolites. The protein is FAD-dependent monooxygenase terD of Aspergillus terreus (strain NIH 2624 / FGSC A1156).